The sequence spans 486 residues: Alliin lyase 1 (486 aa).

The signal sequence occupies residues 1–28 (MVESYKKIGSCNKMPCLVILTCIIMSNS). Positions 29-38 (LVNNNNMVQA) are excised as a propeptide. The region spanning 51–97 (EAVANINCSEHGRAFLDGIISEGSPKCECNTCYTGPDCSEKIQGCSA) is the EGF-like; atypical domain. Asn57 carries N-linked (GlcNAc...) asparagine glycosylation. 3 cysteine pairs are disulfide-bonded: Cys58–Cys77, Cys79–Cys88, and Cys82–Cys95. Residue 130–138 (YFFNPVSNF) coordinates chloride. Residues Asn184 and Asn229 are each glycosylated (N-linked (GlcNAc...) asparagine). An N6-(pyridoxal phosphate)lysine modification is found at Lys289. N-linked (GlcNAc...) asparagine glycosylation occurs at Asn366. An intrachain disulfide couples Cys406 to Cys414.

It belongs to the alliinase family. Homodimer. Pyridoxal 5'-phosphate is required as a cofactor. As to expression, expressed in bulb (at protein level). Expressed in shoots.

It is found in the vacuole. It carries out the reaction an S-alkyl-L-cysteine S-oxide = an S-alkyl sulfenate + 2-aminoprop-2-enoate. Able to cleave the C-S bond of sulfoxide derivatives of Cys to produce allicin, thus giving rise to all sulfur compounds which are responsible for most of the properties of garlic, such as the specific smell and flavor as well as the health benefits like blood lipid or blood pressure lowering. The polypeptide is Alliin lyase 1 (Allium sativum (Garlic)).